The following is a 250-amino-acid chain: 23S rRNA (guanosine-2'-O-)-methyltransferase RlmB (250 aa).

The S-adenosyl-L-methionine site is built by G197, I217, and M226.

This sequence belongs to the class IV-like SAM-binding methyltransferase superfamily. RNA methyltransferase TrmH family. RlmB subfamily.

It is found in the cytoplasm. The catalysed reaction is guanosine(2251) in 23S rRNA + S-adenosyl-L-methionine = 2'-O-methylguanosine(2251) in 23S rRNA + S-adenosyl-L-homocysteine + H(+). Its function is as follows. Specifically methylates the ribose of guanosine 2251 in 23S rRNA. The chain is 23S rRNA (guanosine-2'-O-)-methyltransferase RlmB from Neisseria meningitidis serogroup B (strain ATCC BAA-335 / MC58).